Here is a 161-residue protein sequence, read N- to C-terminus: Probable cell wall elongation regulator TseB (161 aa).

Residues 1 to 5 (MRKKA) lie on the Cytoplasmic side of the membrane. Residues 6–26 (LIFTVIFGIIFLAVLLVSASI) traverse the membrane as a helical segment. Residues 27 to 161 (YKSAMAQKEE…TGKILKNITP (135 aa)) are Extracellular-facing.

In terms of assembly, interacts with the penicillin-binding protein PBP2A, a monofunctional transpeptidase.

The protein resides in the cell membrane. In terms of biological role, required for normal cell shape. Plays an important role in cell wall elongation during exponential phase and spore outgrowth. Probably regulates the activity of the penicillin-binding protein PBP2A through a direct interaction. Not required for PBP2A activity, stability and localization. The chain is Probable cell wall elongation regulator TseB from Bacillus subtilis (strain 168).